The chain runs to 205 residues: CASP-like protein 2A1 (205 aa).

Residues 1-35 (MMGDKGEKECATASSPIELGCGEGDESGNKSSMRT) lie on the Cytoplasmic side of the membrane. A helical transmembrane segment spans residues 36 to 56 (VETLLRLVPVALCTVSLVVML). Over 57–77 (KNSQTNDFGSLSYSDLGAFRY) the chain is Extracellular. Residues 78 to 98 (LVHANGICAGYSLLSAIFTAM) traverse the membrane as a helical segment. The Cytoplasmic segment spans residues 99 to 106 (PRPPTMSR). The chain crosses the membrane as a helical span at residues 107–127 (AWTFFLLDQVLTYLILAAGAV). Residues 128–157 (STEVVYLAYKGDEAVTWSDACSSFGGFCQK) lie on the Extracellular side of the membrane. Residues 158–178 (TTASISITFVTVLCYAVLSLI) traverse the membrane as a helical segment. The Cytoplasmic portion of the chain corresponds to 179–205 (SSYKLFSKYDAPICFNGKGIEIAAFHS).

The protein belongs to the Casparian strip membrane proteins (CASP) family. As to quaternary structure, homodimer and heterodimers.

It localises to the cell membrane. In Vitis vinifera (Grape), this protein is CASP-like protein 2A1.